A 311-amino-acid polypeptide reads, in one-letter code: MATYLDFEQKIKNIQDEIESSIVKGDSHAKEILERELKKEVERVYSNLSDYQKLQLARHPDRPYAMDYIKLILKDAYEIHGDRHFSDDGAIVAFLGYIEGEKVIVIGEEKGRGTKNKLARNFGMPNPEGYRKALRIAKLAERFEIPLLMLIDTPGAYPGIGAEERGQSEAIAKNLQEFSQLKIPTVSVVIGEGGSGGALAIGVADRLAMMRYSVFSVISPEGCAAILWNDPSKIESATKAMKITPDELKKANLIDDIIEEPEIGAHRDKEGAAKSLVNYFLKSLEEIRGEEHYLQKRFDRLMSYGSFTQSA.

Positions 36–286 (ELKKEVERVY…VNYFLKSLEE (251 aa)) constitute a CoA carboxyltransferase C-terminal domain.

The protein belongs to the AccA family. As to quaternary structure, acetyl-CoA carboxylase is a heterohexamer composed of biotin carboxyl carrier protein (AccB), biotin carboxylase (AccC) and two subunits each of ACCase subunit alpha (AccA) and ACCase subunit beta (AccD).

The protein resides in the cytoplasm. The catalysed reaction is N(6)-carboxybiotinyl-L-lysyl-[protein] + acetyl-CoA = N(6)-biotinyl-L-lysyl-[protein] + malonyl-CoA. Its pathway is lipid metabolism; malonyl-CoA biosynthesis; malonyl-CoA from acetyl-CoA: step 1/1. Component of the acetyl coenzyme A carboxylase (ACC) complex. First, biotin carboxylase catalyzes the carboxylation of biotin on its carrier protein (BCCP) and then the CO(2) group is transferred by the carboxyltransferase to acetyl-CoA to form malonyl-CoA. The chain is Acetyl-coenzyme A carboxylase carboxyl transferase subunit alpha from Wolinella succinogenes (strain ATCC 29543 / DSM 1740 / CCUG 13145 / JCM 31913 / LMG 7466 / NCTC 11488 / FDC 602W) (Vibrio succinogenes).